We begin with the raw amino-acid sequence, 197 residues long: uncharacterized protein (197 aa).

The next 6 helical transmembrane spans lie at 5–23, 27–46, 55–77, 87–109, 116–138, and 153–174; these read LNLLIFFIAALLIALGLRF, ISFAGLILLLAVVPALMLRF, VIAGIFVLGLALNALIGVALAYT, LSLLPLTLVLTANVFATSLVIRI, VFAFYFWFLISVGLAFLFLLPTG, and FVEFPILYSELALIPSAFCLVF.

It localises to the cell membrane. This is an uncharacterized protein from Archaeoglobus fulgidus (strain ATCC 49558 / DSM 4304 / JCM 9628 / NBRC 100126 / VC-16).